The following is a 420-amino-acid chain: Enolase (420 aa).

Gln162 contributes to the (2R)-2-phosphoglycerate binding site. Glu206 (proton donor) is an active-site residue. Mg(2+) contacts are provided by Asp241, Glu282, and Asp308. (2R)-2-phosphoglycerate contacts are provided by Lys333, Arg362, Ser363, and Lys384. Lys333 acts as the Proton acceptor in catalysis.

Belongs to the enolase family. Mg(2+) is required as a cofactor.

It localises to the cytoplasm. The protein resides in the secreted. Its subcellular location is the cell surface. It carries out the reaction (2R)-2-phosphoglycerate = phosphoenolpyruvate + H2O. It functions in the pathway carbohydrate degradation; glycolysis; pyruvate from D-glyceraldehyde 3-phosphate: step 4/5. In terms of biological role, catalyzes the reversible conversion of 2-phosphoglycerate (2-PG) into phosphoenolpyruvate (PEP). It is essential for the degradation of carbohydrates via glycolysis. This is Enolase from Methanothrix thermoacetophila (strain DSM 6194 / JCM 14653 / NBRC 101360 / PT) (Methanosaeta thermophila).